A 569-amino-acid chain; its full sequence is Endonuclease/exonuclease/phosphatase family domain-containing protein 1 (569 aa).

The segment at 1–20 (MGSTLGCHRSIPRDPSDLSH) is disordered. G2 carries N-myristoyl glycine lipidation. Over residues 11–20 (IPRDPSDLSH) the composition is skewed to basic and acidic residues. 3 positions are modified to phosphoserine: S16, S21, and S25. The HhH domain occupies 38–67 (ERLNINTATEEELMTLPGVTRAVARSIVEY). A phosphoserine mark is found at S106, S110, S160, and S173. Positions 200 to 224 (SRPPSTHTNGGLTFTAKPHPSPTSL) are disordered. Residues 202 to 211 (PPSTHTNGGL) are compositionally biased toward polar residues. Residue T265 is modified to Phosphothreonine. The disordered stretch occupies residues 548–569 (EVPRNGNGVTLEPSEANVKHER).

The protein is Endonuclease/exonuclease/phosphatase family domain-containing protein 1 (Eepd1) of Rattus norvegicus (Rat).